The following is a 485-amino-acid chain: ATP synthase subunit beta, cyanelle (485 aa).

162-169 (GGAGVGKT) provides a ligand contact to ATP.

The protein belongs to the ATPase alpha/beta chains family. In terms of assembly, F-type ATPases have 2 components, CF(1) - the catalytic core - and CF(0) - the membrane proton channel. CF(1) has five subunits: alpha(3), beta(3), gamma(1), delta(1), epsilon(1). CF(0) has four main subunits: a(1), b(1), b'(1) and c(9-12).

Its subcellular location is the plastid. The protein localises to the cyanelle thylakoid membrane. It catalyses the reaction ATP + H2O + 4 H(+)(in) = ADP + phosphate + 5 H(+)(out). Produces ATP from ADP in the presence of a proton gradient across the membrane. The catalytic sites are hosted primarily by the beta subunits. This Cyanophora paradoxa protein is ATP synthase subunit beta, cyanelle.